The chain runs to 202 residues: Potassium-transporting ATPase KdpC subunit (202 aa).

Residues 7 to 27 (PAIFVLLALTLITGLLYPLAM) traverse the membrane as a helical segment. The disordered stretch occupies residues 66–103 (FHGRPSATSTADPNDSTKTVPAPYNAANSSGSNLGPTS). Polar residues-rich tracts occupy residues 71–84 (SATS…STKT) and 91–101 (AANSSGSNLGP).

This sequence belongs to the KdpC family. As to quaternary structure, the system is composed of three essential subunits: KdpA, KdpB and KdpC.

The protein localises to the cell inner membrane. Part of the high-affinity ATP-driven potassium transport (or Kdp) system, which catalyzes the hydrolysis of ATP coupled with the electrogenic transport of potassium into the cytoplasm. This subunit acts as a catalytic chaperone that increases the ATP-binding affinity of the ATP-hydrolyzing subunit KdpB by the formation of a transient KdpB/KdpC/ATP ternary complex. This chain is Potassium-transporting ATPase KdpC subunit, found in Bradyrhizobium sp. (strain ORS 278).